A 345-amino-acid polypeptide reads, in one-letter code: Phosphoribosylformylglycinamidine cyclo-ligase (345 aa).

Belongs to the AIR synthase family.

The protein resides in the cytoplasm. The enzyme catalyses 2-formamido-N(1)-(5-O-phospho-beta-D-ribosyl)acetamidine + ATP = 5-amino-1-(5-phospho-beta-D-ribosyl)imidazole + ADP + phosphate + H(+). It participates in purine metabolism; IMP biosynthesis via de novo pathway; 5-amino-1-(5-phospho-D-ribosyl)imidazole from N(2)-formyl-N(1)-(5-phospho-D-ribosyl)glycinamide: step 2/2. This chain is Phosphoribosylformylglycinamidine cyclo-ligase, found in Shewanella oneidensis (strain ATCC 700550 / JCM 31522 / CIP 106686 / LMG 19005 / NCIMB 14063 / MR-1).